We begin with the raw amino-acid sequence, 1196 residues long: Jouberin (1196 aa).

Positions 13–45 (KVRFEELLKTHSDLMREKKKLKKKLVRSEENIS) form a coiled coil. Residue Ser45 is modified to Phosphoserine. 3 disordered regions span residues 56–186 (MKET…EEDE), 215–242 (QLTY…KEVP), and 254–327 (ISGD…HEIT). A compositionally biased stretch (polar residues) spans 80 to 91 (DDVSAANTNNLK). Over residues 92–101 (KSTRVTKNKL) the composition is skewed to basic residues. Residues 102 to 113 (RNTQLATENPNG) show a composition bias toward polar residues. Composition is skewed to basic and acidic residues over residues 141-154 (LKPE…DSTH), 166-179 (DHQK…GREE), and 224-233 (LFHDDKLSSE). The tract at residues 141 to 434 (LKPETPENKV…VFNENFPYLL (294 aa)) is interaction with HAP1. A compositionally biased stretch (basic residues) spans 300–309 (KPKKTKKKTK). 7 WD repeats span residues 607–649 (AGER…FMRE), 652–691 (GHLN…TNTF), 695–735 (PHPS…DSAI), 742–781 (VHKS…NDLE), 797–837 (EFKG…ARKF), 841–880 (ANYR…QVAM), and 885–926 (PFKS…AQQE). A Phosphoserine modification is found at Ser1002. In terms of domain architecture, SH3 spans 1051–1111 (DTAPTVVALY…PANHVASETL (61 aa)). The segment at 1115–1196 (LPPEIKERSP…QAGRKVTLIE (82 aa)) is disordered. Composition is skewed to basic and acidic residues over residues 1117–1136 (PEIK…KIEK) and 1161–1182 (THSE…DTRM). Residue Ser1123 is modified to Phosphoserine.

As to quaternary structure, self-associates. Part of the tectonic-like complex (also named B9 complex). Interacts with MKS1. Interacts with NPHP1; probably as heterodimers and/or AHI1(2):NPHP1(2) heterotetramers. Interacts (via SH3 domain) with the dynamin GTPase DNM2. Interacts with HAP1; probably as AHI1(2):HAP1(2) heterotetramers. Interacts with RAB8A. Interacts with CEND1. Interacts with CTNNB1/beta-catenin. Interacts with SPATA7. Highly expressed in the most primitive normal hematopoietic cells. Expressed in brain, particularly in neurons that give rise to the crossing axons of the corticospinal tract and superior cerebellar peduncles. Expressed in kidney (renal collecting duct cells) (at protein level).

Its subcellular location is the cytoplasm. The protein resides in the cytoskeleton. It is found in the cilium basal body. The protein localises to the cell junction. It localises to the adherens junction. Its subcellular location is the microtubule organizing center. The protein resides in the centrosome. It is found in the centriole. Its function is as follows. Involved in vesicle trafficking and required for ciliogenesis, formation of primary non-motile cilium, and recruitment of RAB8A to the basal body of primary cilium. Component of the tectonic-like complex, a complex localized at the transition zone of primary cilia and acting as a barrier that prevents diffusion of transmembrane proteins between the cilia and plasma membranes. Involved in neuronal differentiation. As a positive modulator of classical Wnt signaling, may play a crucial role in ciliary signaling during cerebellum embryonic development. This chain is Jouberin (AHI1), found in Homo sapiens (Human).